The primary structure comprises 64 residues: Cytochrome c oxidase subunit 5C (64 aa).

Residues 16–34 traverse the membrane as a helical segment; that stretch reads VVKELVIGFSLGLVAGGFW.

It belongs to the cytochrome c oxidase subunit 5C family. In terms of assembly, sweet potato cytochrome C oxidase consists of at least seven different polypeptides species, subunits I, II, III, IV, Va, Vb, and Vc in order of MW.

Its subcellular location is the mitochondrion inner membrane. In terms of biological role, this protein is one of the nuclear-coded polypeptide chains of cytochrome c oxidase, the terminal oxidase in mitochondrial electron transport. This chain is Cytochrome c oxidase subunit 5C (COX5C), found in Ipomoea batatas (Sweet potato).